The following is a 619-amino-acid chain: 4-hydroxyphenylalkanoate adenylyltransferase (619 aa).

Belongs to the ATP-dependent AMP-binding enzyme family.

It catalyses the reaction 17-(4-hydroxyphenyl)heptadecanoate + holo-[(phenol)carboxyphthiodiolenone synthase] + ATP = 17-(4-hydroxyphenyl)heptadecanoyl-[(phenol)carboxyphthiodiolenone synthase] + AMP + diphosphate. It carries out the reaction 19-(4-hydroxyphenyl)nonadecanoate + holo-[(phenol)carboxyphthiodiolenone synthase] + ATP = 19-(4-hydroxyphenyl)nonadecanoyl-[(phenol)carboxyphthiodiolenone synthase] + AMP + diphosphate. It participates in lipid metabolism; fatty acid biosynthesis. In terms of biological role, catalyzes the activation of long-chain fatty acids as acyl-adenylates (acyl-AMP), which are then transferred to the multifunctional polyketide synthase PpsA for further chain extension. Involved in the biosynthesis of phenolphthiocerol, which is an important intermediate in the biosynthesis of phenolic glycolipid (PGL), also called mycosid B. The protein is 4-hydroxyphenylalkanoate adenylyltransferase (fadD29) of Mycobacterium bovis (strain ATCC BAA-935 / AF2122/97).